We begin with the raw amino-acid sequence, 1752 residues long: Serine protease/ABC transporter B family protein tagA (1752 aa).

A signal peptide spans 1 to 24 (MNKKLFIFGLSLFLFLFIFNLSLS). N-linked (GlcNAc...) asparagine glycosylation occurs at Asn20. One can recognise a Peptidase S8 domain in the interval 280-696 (HYSIQSGSAS…FGNIQLSKLI (417 aa)). Residues Asp312 and His352 each act as charge relay system in the active site. Residues Asn400 and Asn557 are each glycosylated (N-linked (GlcNAc...) asparagine). Catalysis depends on Ser625, which acts as the Charge relay system. 3 N-linked (GlcNAc...) asparagine glycosylation sites follow: Asn653, Asn785, and Asn823. Residues 909–929 (IVLLGIFGIIIVGAVIFVLVC) form a helical membrane-spanning segment. The tract at residues 946–1032 (DKGGDGNSIR…QNNSPQYDED (87 aa)) is disordered. Residues 962 to 994 (NNNNNNNNNNNNNNNNNNNNNNNNNNNNNNNNN) are compositionally biased toward low complexity. Residue Asn993 is glycosylated (N-linked (GlcNAc...) asparagine). Polar residues predominate over residues 995–1004 (SNGKQSNIEL). The segment covering 1013 to 1028 (GTPNGDDQQQQNNSPQ) has biased composition (low complexity). The next 6 helical transmembrane spans lie at 1058–1078 (ILGLALFLSFIDVALGLAVPL), 1102–1122 (FALIIIGMIIVQFLSGILLAL), 1174–1194 (IPHMIIQIATIGGTLIMLFII), 1200–1220 (LVVLCPLPILLVFSKFYGGYI), 1285–1305 (TSGIFEQLSVFILLWYGSSLV), and 1315–1335 (LIAFNLFLPFITGAVTQVASL). An ABC transmembrane type-1 domain is found at 1059 to 1341 (LGLALFLSFI…VASLYTTYKS (283 aa)). The ABC transporter domain maps to 1374–1610 (IQFNKVSFAY…KGMFYDFVQI (237 aa)). An ATP-binding site is contributed by 1409 to 1416 (GPSGGGKS). The segment at 1621 to 1686 (IQLPSNSRNT…SRSPPPMWRQ (66 aa)) is disordered. The span at 1631 to 1642 (RNADKLRNRSET) shows a compositional bias: basic and acidic residues. N-linked (GlcNAc...) asparagine glycans are attached at residues Asn1638, Asn1670, and Asn1694.

This sequence in the C-terminal section; belongs to the ABC transporter superfamily. ABCB family. Multidrug resistance exporter (TC 3.A.1.201) subfamily. It in the N-terminal section; belongs to the peptidase S8 family.

It is found in the membrane. Required for a general cell fate determination at the onset of development. Required for the specification of an initial population of prespore cells in which tagA is expressed. Required for normal SDF-2 signaling during spore encapsulation. The polypeptide is Serine protease/ABC transporter B family protein tagA (tagA) (Dictyostelium discoideum (Social amoeba)).